The chain runs to 195 residues: ATP-dependent Clp protease proteolytic subunit 1 (195 aa).

Serine 96 functions as the Nucleophile in the catalytic mechanism. Histidine 121 is a catalytic residue.

The protein belongs to the peptidase S14 family. Fourteen ClpP subunits assemble into 2 heptameric rings which stack back to back to give a disk-like structure with a central cavity, resembling the structure of eukaryotic proteasomes.

The protein resides in the cytoplasm. It carries out the reaction Hydrolysis of proteins to small peptides in the presence of ATP and magnesium. alpha-casein is the usual test substrate. In the absence of ATP, only oligopeptides shorter than five residues are hydrolyzed (such as succinyl-Leu-Tyr-|-NHMec, and Leu-Tyr-Leu-|-Tyr-Trp, in which cleavage of the -Tyr-|-Leu- and -Tyr-|-Trp bonds also occurs).. In terms of biological role, cleaves peptides in various proteins in a process that requires ATP hydrolysis. Has a chymotrypsin-like activity. Plays a major role in the degradation of misfolded proteins. The polypeptide is ATP-dependent Clp protease proteolytic subunit 1 (Prochlorococcus marinus (strain MIT 9312)).